The sequence spans 432 residues: Argininosuccinate lyase (432 aa).

This sequence belongs to the lyase 1 family. Argininosuccinate lyase subfamily.

It localises to the cytoplasm. It catalyses the reaction 2-(N(omega)-L-arginino)succinate = fumarate + L-arginine. The protein operates within amino-acid biosynthesis; L-arginine biosynthesis; L-arginine from L-ornithine and carbamoyl phosphate: step 3/3. This Xanthomonas euvesicatoria pv. vesicatoria (strain 85-10) (Xanthomonas campestris pv. vesicatoria) protein is Argininosuccinate lyase.